The following is a 244-amino-acid chain: Type III pantothenate kinase (244 aa).

7–14 (DIGNTRLK) is an ATP binding site. Residues Tyr95 and 102–105 (GIDR) contribute to the substrate site. Asp104 (proton acceptor) is an active-site residue. Thr126 lines the ATP pocket. Thr177 lines the substrate pocket.

Belongs to the type III pantothenate kinase family. In terms of assembly, homodimer. NH4(+) is required as a cofactor. It depends on K(+) as a cofactor.

It localises to the cytoplasm. The catalysed reaction is (R)-pantothenate + ATP = (R)-4'-phosphopantothenate + ADP + H(+). Its pathway is cofactor biosynthesis; coenzyme A biosynthesis; CoA from (R)-pantothenate: step 1/5. In terms of biological role, catalyzes the phosphorylation of pantothenate (Pan), the first step in CoA biosynthesis. The polypeptide is Type III pantothenate kinase (Acinetobacter baumannii (strain AB307-0294)).